The primary structure comprises 425 residues: Lysosome-associated membrane glycoprotein 2 (425 aa).

An N-terminal signal peptide occupies residues 1–27 (MAPPRCPAGLALLLLLLGACGFFQSYA). The interval 28–192 (VEVDVKDASN…SKKESRCYAD (165 aa)) is first lumenal domain. Topologically, residues 28-389 (VEVDVKDASN…EECFADSDLN (362 aa)) are lumenal. N37, N56, N62, N74, N100, N105, N120, N163, N170, N179, N206, N232, N239, N252, N276, N287, N298, N312, N320, and N331 each carry an N-linked (GlcNAc...) asparagine glycan. The cysteines at positions 40 and 78 are disulfide-linked. C153 and C189 are disulfide-bonded. Residues 193–238 (TPTAAPTVLPTVANVTTASTTISPAPTTAPKPAENPVTGNYSLKTG) form a hinge region. Residues 239–390 (NKTCLLATVG…ECFADSDLNF (152 aa)) are second lumenal domain. The cysteines at positions 242 and 274 are disulfide-linked. A disulfide bridge links C345 with C382. A helical membrane pass occupies residues 390–414 (FLIPVAVGMALGFLIILVFISYIIG). Over 415–425 (RRKSRTGYQSV) the chain is Cytoplasmic. The interval 416–419 (RKSR) is important for binding and subsequent lysosomal degradation of target proteins.

It belongs to the LAMP family. Monomer. Forms large homooligomers. Extensively N-glycosylated. Contains a minor proportion of O-linked glycans.

Its subcellular location is the lysosome membrane. It is found in the endosome membrane. It localises to the cell membrane. The protein localises to the cytoplasmic vesicle. The protein resides in the autophagosome membrane. Lysosomal membrane glycoprotein which plays an important role in lysosome biogenesis, lysosomal pH regulation and autophagy. Plays an important role in chaperone-mediated autophagy, a process that mediates lysosomal degradation of proteins in response to various stresses and as part of the normal turnover of proteins with a long biological half-live. In the chaperone-mediated autophagy, acts downstream of chaperones, such as HSPA8/HSC70, which recognize and bind substrate proteins and mediate their recruitment to lysosomes, where target proteins bind LAMP2. Plays a role in lysosomal protein degradation in response to starvation. Required for the fusion of autophagosomes with lysosomes during autophagy. The polypeptide is Lysosome-associated membrane glycoprotein 2 (LAMP2) (Gallus gallus (Chicken)).